The following is a 290-amino-acid chain: 4-hydroxy-3-methylbut-2-enyl diphosphate reductase (290 aa).

Cysteine 13 provides a ligand contact to [4Fe-4S] cluster. (2E)-4-hydroxy-3-methylbut-2-enyl diphosphate is bound by residues histidine 41 and histidine 75. Dimethylallyl diphosphate is bound by residues histidine 41 and histidine 75. 2 residues coordinate isopentenyl diphosphate: histidine 41 and histidine 75. [4Fe-4S] cluster is bound at residue cysteine 97. Histidine 129 serves as a coordination point for (2E)-4-hydroxy-3-methylbut-2-enyl diphosphate. Histidine 129 is a binding site for dimethylallyl diphosphate. Residue histidine 129 participates in isopentenyl diphosphate binding. Glutamate 131 functions as the Proton donor in the catalytic mechanism. Position 167 (threonine 167) interacts with (2E)-4-hydroxy-3-methylbut-2-enyl diphosphate. [4Fe-4S] cluster is bound at residue cysteine 198. Positions 226, 227, 228, and 270 each coordinate (2E)-4-hydroxy-3-methylbut-2-enyl diphosphate. Dimethylallyl diphosphate contacts are provided by serine 226, serine 227, asparagine 228, and serine 270. 4 residues coordinate isopentenyl diphosphate: serine 226, serine 227, asparagine 228, and serine 270.

It belongs to the IspH family. [4Fe-4S] cluster serves as cofactor.

The catalysed reaction is isopentenyl diphosphate + 2 oxidized [2Fe-2S]-[ferredoxin] + H2O = (2E)-4-hydroxy-3-methylbut-2-enyl diphosphate + 2 reduced [2Fe-2S]-[ferredoxin] + 2 H(+). It catalyses the reaction dimethylallyl diphosphate + 2 oxidized [2Fe-2S]-[ferredoxin] + H2O = (2E)-4-hydroxy-3-methylbut-2-enyl diphosphate + 2 reduced [2Fe-2S]-[ferredoxin] + 2 H(+). Its pathway is isoprenoid biosynthesis; dimethylallyl diphosphate biosynthesis; dimethylallyl diphosphate from (2E)-4-hydroxy-3-methylbutenyl diphosphate: step 1/1. The protein operates within isoprenoid biosynthesis; isopentenyl diphosphate biosynthesis via DXP pathway; isopentenyl diphosphate from 1-deoxy-D-xylulose 5-phosphate: step 6/6. Its function is as follows. Catalyzes the conversion of 1-hydroxy-2-methyl-2-(E)-butenyl 4-diphosphate (HMBPP) into a mixture of isopentenyl diphosphate (IPP) and dimethylallyl diphosphate (DMAPP). Acts in the terminal step of the DOXP/MEP pathway for isoprenoid precursor biosynthesis. In Bacteroides fragilis (strain ATCC 25285 / DSM 2151 / CCUG 4856 / JCM 11019 / LMG 10263 / NCTC 9343 / Onslow / VPI 2553 / EN-2), this protein is 4-hydroxy-3-methylbut-2-enyl diphosphate reductase.